The chain runs to 407 residues: Putative colanic acid biosynthesis glycosyl transferase WcaI (407 aa).

The protein operates within slime biogenesis; slime polysaccharide biosynthesis. The chain is Putative colanic acid biosynthesis glycosyl transferase WcaI (wcaI) from Escherichia coli (strain K12).